The primary structure comprises 117 residues: Large ribosomal subunit protein uL18 (117 aa).

The protein belongs to the universal ribosomal protein uL18 family. Part of the 50S ribosomal subunit; part of the 5S rRNA/L5/L18/L25 subcomplex. Contacts the 5S and 23S rRNAs.

In terms of biological role, this is one of the proteins that bind and probably mediate the attachment of the 5S RNA into the large ribosomal subunit, where it forms part of the central protuberance. This chain is Large ribosomal subunit protein uL18, found in Laribacter hongkongensis (strain HLHK9).